Here is an 89-residue protein sequence, read N- to C-terminus: UPF0213 protein LMOf2365_0181 (89 aa).

Residues 5–80 form the GIY-YIG domain; it reads SEHFFYVLKC…KKLSRKNKDA (76 aa).

It belongs to the UPF0213 family.

This chain is UPF0213 protein LMOf2365_0181, found in Listeria monocytogenes serotype 4b (strain F2365).